Here is a 433-residue protein sequence, read N- to C-terminus: 4-hydroxy-3-methylbut-2-en-1-yl diphosphate synthase (flavodoxin) (433 aa).

[4Fe-4S] cluster is bound by residues C320, C323, C366, and E373.

Belongs to the IspG family. [4Fe-4S] cluster serves as cofactor.

The enzyme catalyses (2E)-4-hydroxy-3-methylbut-2-enyl diphosphate + oxidized [flavodoxin] + H2O + 2 H(+) = 2-C-methyl-D-erythritol 2,4-cyclic diphosphate + reduced [flavodoxin]. It participates in isoprenoid biosynthesis; isopentenyl diphosphate biosynthesis via DXP pathway; isopentenyl diphosphate from 1-deoxy-D-xylulose 5-phosphate: step 5/6. Converts 2C-methyl-D-erythritol 2,4-cyclodiphosphate (ME-2,4cPP) into 1-hydroxy-2-methyl-2-(E)-butenyl 4-diphosphate. The sequence is that of 4-hydroxy-3-methylbut-2-en-1-yl diphosphate synthase (flavodoxin) from Beijerinckia indica subsp. indica (strain ATCC 9039 / DSM 1715 / NCIMB 8712).